We begin with the raw amino-acid sequence, 426 residues long: Histidine--tRNA ligase (426 aa).

It belongs to the class-II aminoacyl-tRNA synthetase family. In terms of assembly, homodimer.

Its subcellular location is the cytoplasm. The enzyme catalyses tRNA(His) + L-histidine + ATP = L-histidyl-tRNA(His) + AMP + diphosphate + H(+). In Streptococcus pyogenes serotype M3 (strain ATCC BAA-595 / MGAS315), this protein is Histidine--tRNA ligase.